The primary structure comprises 350 residues: Protein memo-1 homolog (350 aa).

Belongs to the MEMO1 family. Interacts with rho-1. Expressed in neuronal and non-neuronal cells in the head and tail, pharyngeal cells, spermatheca, distal tip cells, anchor cell and the intestine.

Its function is as follows. Plays a role in the oxidative stress response and the maintenance of longevity by regulating the interaction between GTPase rho-1 and oxidase bli-3. In turn, this serves to modulate bli-3 activity and the control of reactive oxygen species production. May control cell migration by relaying extracellular chemotactic signals to the microtubule cytoskeleton. This is Protein memo-1 homolog from Caenorhabditis elegans.